A 1168-amino-acid chain; its full sequence is Transcription-repair-coupling factor (1168 aa).

Residues aspartate 633–isoleucine 794 form the Helicase ATP-binding domain. Glycine 646 to threonine 653 is a binding site for ATP. The short motif at aspartate 747–glutamine 750 is the DEEQ box element. Positions valine 808–asparagine 969 constitute a Helicase C-terminal domain.

This sequence in the N-terminal section; belongs to the UvrB family. The protein in the C-terminal section; belongs to the helicase family. RecG subfamily.

The protein resides in the cytoplasm. Its function is as follows. Couples transcription and DNA repair by recognizing RNA polymerase (RNAP) stalled at DNA lesions. Mediates ATP-dependent release of RNAP and its truncated transcript from the DNA, and recruitment of nucleotide excision repair machinery to the damaged site. This is Transcription-repair-coupling factor from Staphylococcus aureus (strain Mu50 / ATCC 700699).